We begin with the raw amino-acid sequence, 468 residues long: Cell division protein FtsA (468 aa).

Positions 416-468 are disordered; it reads NKKDTHENEVESSDEEIYQSEDNHQEHKQNHEHVQDKDKEESKFKKLMKSLFE. Residues 425 to 434 are compositionally biased toward acidic residues; sequence VESSDEEIYQ. The span at 436–459 shows a compositional bias: basic and acidic residues; that stretch reads EDNHQEHKQNHEHVQDKDKEESKF.

Belongs to the FtsA/MreB family. In terms of assembly, self-interacts. Interacts with FtsZ.

The protein resides in the cell membrane. Functionally, cell division protein that is involved in the assembly of the Z ring. May serve as a membrane anchor for the Z ring. The polypeptide is Cell division protein FtsA (Staphylococcus aureus (strain MRSA252)).